Reading from the N-terminus, the 309-residue chain is Tagatose-6-phosphate kinase (309 aa).

It belongs to the carbohydrate kinase PfkB family. LacC subfamily.

The enzyme catalyses D-tagatofuranose 6-phosphate + ATP = D-tagatofuranose 1,6-bisphosphate + ADP + H(+). The protein operates within carbohydrate metabolism; D-tagatose 6-phosphate degradation; D-glyceraldehyde 3-phosphate and glycerone phosphate from D-tagatose 6-phosphate: step 1/2. In Streptococcus sanguinis (strain SK36), this protein is Tagatose-6-phosphate kinase.